A 343-amino-acid chain; its full sequence is N-acetyl-gamma-glutamyl-phosphate reductase (343 aa).

Residue cysteine 147 is part of the active site.

Belongs to the NAGSA dehydrogenase family. Type 1 subfamily.

It is found in the cytoplasm. The catalysed reaction is N-acetyl-L-glutamate 5-semialdehyde + phosphate + NADP(+) = N-acetyl-L-glutamyl 5-phosphate + NADPH + H(+). Its pathway is amino-acid biosynthesis; L-arginine biosynthesis; N(2)-acetyl-L-ornithine from L-glutamate: step 3/4. Functionally, catalyzes the NADPH-dependent reduction of N-acetyl-5-glutamyl phosphate to yield N-acetyl-L-glutamate 5-semialdehyde. The protein is N-acetyl-gamma-glutamyl-phosphate reductase of Staphylococcus aureus (strain Mu3 / ATCC 700698).